We begin with the raw amino-acid sequence, 125 residues long: MKEPLIEVKREYNLIKTLTGKKFVVSTSIVVVLLIINMIFYGIRIHELAVIRRNSETHISSFNYKGQAQAQNKRVKNTRLFEKCKSKFNNFCIYGECMNIINLDKKFCICNKGYTGNRCDIVSIR.

The signal sequence occupies residues 1 to 48 (MKEPLIEVKREYNLIKTLTGKKFVVSTSIVVVLLIINMIFYGIRIHEL). The EGF-like domain occupies 80–120 (LFEKCKSKFNNFCIYGECMNIINLDKKFCICNKGYTGNRCD). Intrachain disulfides connect cysteine 84-cysteine 97, cysteine 92-cysteine 108, and cysteine 110-cysteine 119.

The protein localises to the secreted. The sequence is that of Probable growth factor FPV211 from Vertebrata (FPV).